A 255-amino-acid polypeptide reads, in one-letter code: uncharacterized protein (255 aa).

The first 23 residues, 1-23 (MKRLNKLVLGIIFLFLVISITAG), serve as a signal peptide directing secretion. The N-palmitoyl cysteine moiety is linked to residue cysteine 24. Cysteine 24 carries the S-diacylglycerol cysteine lipid modification.

Belongs to the staphylococcal tandem lipoprotein family.

The protein localises to the cell membrane. This is an uncharacterized protein from Staphylococcus aureus (strain USA300).